The chain runs to 318 residues: Probable plastid-lipid-associated protein 1, chloroplastic (318 aa).

The transit peptide at Met-1–Arg-55 directs the protein to the chloroplast. Thr-57 carries the post-translational modification Phosphothreonine.

Belongs to the PAP/fibrillin family. In terms of assembly, interacts (via N-terminus) with ABI2. In terms of tissue distribution, expressed in flower buds. Detected in tapetal cells, endothecium and connective in anthers and in subepidermal cells in filaments.

It localises to the plastid. The protein localises to the chloroplast. It is found in the plastoglobule. The protein resides in the chloroplast thylakoid. Probably involved in light/cold stress-related jasmonate (JA) biosynthesis. Contributes to the protection of photosystem II (PSII) against light stress. This is Probable plastid-lipid-associated protein 1, chloroplastic (PAP1) from Arabidopsis thaliana (Mouse-ear cress).